Here is a 345-residue protein sequence, read N- to C-terminus: Alpha-N-acetylneuraminide alpha-2,8-sialyltransferase (345 aa).

Topologically, residues 1 to 15 (MKLQGSRMWLCPRTR) are cytoplasmic. The chain crosses the membrane as a helical; Signal-anchor for type II membrane protein span at residues 16–36 (LPVGASALGFLILCWLYVFPG). Topologically, residues 37 to 345 (YRLPGHKEMV…KKDVSSQKPH (309 aa)) are lumenal. Residues Asn59 and Asn107 are each glycosylated (N-linked (GlcNAc...) asparagine). 2 cysteine pairs are disulfide-bonded: Cys126-Cys275 and Cys140-Cys335. CMP-N-acetyl-beta-neuraminate-binding residues include Asn131 and Asn154. Residues Asn154 and 176–178 (NPS) each bind substrate. N-linked (GlcNAc...) asparagine glycosylation occurs at Asn233. CMP-N-acetyl-beta-neuraminate-binding residues include Ser262, Thr263, Gly264, Trp284, and His298. 262–264 (STG) contributes to the substrate binding site. His310 serves as the catalytic Proton donor/acceptor.

It belongs to the glycosyltransferase 29 family.

Its subcellular location is the golgi apparatus membrane. It carries out the reaction an N-acetyl-alpha-neuraminyl-(2-&gt;3)-beta-D-galactosyl derivative + CMP-N-acetyl-beta-neuraminate = an N-acetyl-alpha-neuraminyl-(2-&gt;8)-N-acetyl-alpha-neuraminyl-(2-&gt;3)-beta-D-galactosyl derivative + CMP + H(+). The catalysed reaction is a ganglioside GM3 (d18:1(4E)) + CMP-N-acetyl-beta-neuraminate = a ganglioside GD3 (d18:1(4E)) + CMP + H(+). It catalyses the reaction a ganglioside GD3 (d18:1(4E)) + CMP-N-acetyl-beta-neuraminate = a ganglioside GT3 (d18:1(4E)) + CMP + H(+). The enzyme catalyses a ganglioside GD1a (d18:1(4E)) + CMP-N-acetyl-beta-neuraminate = a ganglioside GT1a (d18:1(4E)) + CMP + H(+). It carries out the reaction a ganglioside GT1b (d18:1(4E)) + CMP-N-acetyl-beta-neuraminate = a ganglioside GQ1b (d18:1(4E)) + CMP + H(+). The catalysed reaction is a ganglioside GM1b (d18:1(4E)) + CMP-N-acetyl-beta-neuraminate = a ganglioside GD1c (d18:1(4E)) + CMP + H(+). It catalyses the reaction a ganglioside GD3 + CMP-N-acetyl-beta-neuraminate = a ganglioside GT3 + CMP + H(+). The enzyme catalyses [alpha-N-acetylneuraminyl-(2-&gt;8)](n)-alpha-N-acetylneuraminyl-(2-&gt;8)-alpha-N-acetylneuraminyl-(2-&gt;3)-beta-D-galactosyl-(1-&gt;4)-beta-D-glucosyl-(1&lt;-&gt;1)-ceramide + CMP-N-acetyl-beta-neuraminate = [alpha-N-acetylneuraminyl-(2-&gt;8)](n+1)-alpha-N-acetylneuraminyl-(2-&gt;8)-alpha-N-acetylneuraminyl-(2-&gt;3)-beta-D-galactosyl-(1-&gt;4)-beta-D-glucosyl-(1&lt;-&gt;1)-ceramide + CMP + H(+). It functions in the pathway protein modification; protein glycosylation. Its pathway is lipid metabolism; sphingolipid metabolism. Its function is as follows. Catalyzes the addition of sialic acid in alpha 2,8-linkage to the sialic acid moiety of the ganglioside GM3 to form ganglioside GD3; gangliosides are a subfamily of complex glycosphingolipds that contain one or more residues of sialic acid. Glycosphingolipids are required for convergence extension movements during early development. Can catalyze the addition of a second alpha-2,8- sialic acid to GD3 to form GT3. Can use GM1b, GD1a and GT1b as acceptor substrates to synthesize GD1c, GT1a and GQ1b respectively. The sequence is that of Alpha-N-acetylneuraminide alpha-2,8-sialyltransferase from Xenopus tropicalis (Western clawed frog).